A 146-amino-acid polypeptide reads, in one-letter code: Basic phospholipase A2 paradoxin-like alpha chain (146 aa).

The signal sequence occupies residues 1–27 (MHPAHLLVLLAVCVSLLGASDIPPLPL). Intrachain disulfides connect C38–C99, C54–C145, C56–C72, C71–C126, C78–C119, C88–C112, and C106–C117. Y55, G57, and G59 together coordinate Ca(2+). Residue H75 is part of the active site. D76 is a binding site for Ca(2+). The active site involves D120.

It belongs to the phospholipase A2 family. Group I subfamily. D49 sub-subfamily. Heterotrimer of alpha, beta, and gamma chains; non-covalently linked. Ca(2+) is required as a cofactor. Expressed by the venom gland.

The protein localises to the secreted. It carries out the reaction a 1,2-diacyl-sn-glycero-3-phosphocholine + H2O = a 1-acyl-sn-glycero-3-phosphocholine + a fatty acid + H(+). Its function is as follows. Heterotrimer: Snake venom phospholipase A2 (PLA2) heterotrimer that acts as a potent presynaptic neurotoxin by blocking synaptic transmission and synaptic vesicle recycling. May act by binding in a calcium-dependent fashion to neurotonal pentraxin-1 (NPTX1) and neurotonal pentraxin-2 (NPTX2), but not to neuronal pentraxin receptor (NPTXR). Also binds to taipoxin-associated calcium binding protein 49 (RCN2), a protein localized in the lumen of endoplasmic reticulum. In terms of biological role, monomer (alpha chain): Snake venom phospholipase A2 (PLA2) alpha chain that possesses the same high enzymatic activity than the heterotrimer. PLA2 catalyzes the calcium-dependent hydrolysis of the 2-acyl groups in 3-sn-phosphoglycerides. In Oxyuranus microlepidotus (Inland taipan), this protein is Basic phospholipase A2 paradoxin-like alpha chain.